Reading from the N-terminus, the 254-residue chain is PF03932 family protein CutC (254 aa).

The protein belongs to the CutC family.

Its subcellular location is the cytoplasm. The polypeptide is PF03932 family protein CutC (Yersinia pestis bv. Antiqua (strain Antiqua)).